The sequence spans 663 residues: Putative glucosamine-6-phosphate deaminase-like protein BT_0258 (663 aa).

The glucosamine-6-phosphate deaminase-like stretch occupies residues 1–290; that stretch reads MKTNLSSQIT…NLTRIQRPWL (290 aa). The active site involves glutamate 184.

The protein in the N-terminal section; belongs to the glucosamine/galactosamine-6-phosphate isomerase family. NagB subfamily.

This is Putative glucosamine-6-phosphate deaminase-like protein BT_0258 from Bacteroides thetaiotaomicron (strain ATCC 29148 / DSM 2079 / JCM 5827 / CCUG 10774 / NCTC 10582 / VPI-5482 / E50).